Consider the following 207-residue polypeptide: N-(5'-phosphoribosyl)anthranilate isomerase (207 aa).

It belongs to the TrpF family.

The enzyme catalyses N-(5-phospho-beta-D-ribosyl)anthranilate = 1-(2-carboxyphenylamino)-1-deoxy-D-ribulose 5-phosphate. It functions in the pathway amino-acid biosynthesis; L-tryptophan biosynthesis; L-tryptophan from chorismate: step 3/5. The protein is N-(5'-phosphoribosyl)anthranilate isomerase of Staphylococcus epidermidis (strain ATCC 35984 / DSM 28319 / BCRC 17069 / CCUG 31568 / BM 3577 / RP62A).